The sequence spans 180 residues: Bifunctional protein PyrR (180 aa).

The PRPP-binding motif lies at V101–T113.

The protein belongs to the purine/pyrimidine phosphoribosyltransferase family. PyrR subfamily. In terms of assembly, homodimer and homohexamer; in equilibrium.

The enzyme catalyses UMP + diphosphate = 5-phospho-alpha-D-ribose 1-diphosphate + uracil. Regulates transcriptional attenuation of the pyrimidine nucleotide (pyr) operon by binding in a uridine-dependent manner to specific sites on pyr mRNA. This disrupts an antiterminator hairpin in the RNA and favors formation of a downstream transcription terminator, leading to a reduced expression of downstream genes. Functionally, also displays a weak uracil phosphoribosyltransferase activity which is not physiologically significant. This Oceanobacillus iheyensis (strain DSM 14371 / CIP 107618 / JCM 11309 / KCTC 3954 / HTE831) protein is Bifunctional protein PyrR.